The sequence spans 349 residues: Crinkler effector protein 5 (349 aa).

A signal peptide spans 1 to 17 (MVKLFCSIVGVAGSPFS). The LQLFLAK domain stretch occupies residues 18–57 (VEVNEGKTVDDLKKAIKAENLDDPTLRNVAPKNLQLFLAK). The tract at residues 58 to 108 (KGDAWLRYNEDLDTYLQSEIDTSSYLHMRASWKLSKPTLFGPDVSLGEDVV) is DWL domain. Residues 109–115 (HVLVVVP) carry the HVLVXXP motif motif.

Belongs to the Crinkler effector family.

Its subcellular location is the secreted. The protein localises to the host nucleus. Secreted effector that elicits necrosis in host plants, a characteristic of plant innate immunity. In Phytophthora infestans (Potato late blight agent), this protein is Crinkler effector protein 5.